The sequence spans 337 residues: Probable cytosolic iron-sulfur protein assembly protein Ciao1 (337 aa).

WD repeat units lie at residues Gly-12–Ala-51, Gly-58–Asn-97, Gly-102–Cys-141, Thr-147–Ser-186, Ser-193–Gly-232, Tyr-251–Glu-290, and Ala-301–Glu-337.

Belongs to the WD repeat CIA1 family.

In terms of biological role, essential component of the cytosolic iron-sulfur (Fe/S) protein assembly machinery. Required for the maturation of extramitochondrial Fe/S proteins. The polypeptide is Probable cytosolic iron-sulfur protein assembly protein Ciao1 (Aedes aegypti (Yellowfever mosquito)).